The primary structure comprises 308 residues: MKTYIRERRLGEGTYAVIYLGYRALPQDKPLVSSGTRIEDVPVAIKKIKPTKYTQGHEISAIREIKSLKRIDSKYVVRLIDTFVYDKCVHIVLEYVETNLENVIRNSDKIIMPGDIKAWILMVLRGVYECHRLFIIHRDIKPNNILITSEGMVKLADFGLTRGIGNRMTPQAVTRWYRAPELLMGSRDYGSPVDMWSVGCVFAELFLRVPLFAGDTDIQQLDMIFRALGTPVEREWPGVSTLPEFLDFQQYPKASLNGLFSAASSDALDLLEKLLTLNPCNRISCDDAIKHPYFKSSPPPTPIGKLPV.

In terms of domain architecture, Protein kinase spans 4-294 (YIRERRLGEG…CDDAIKHPYF (291 aa)). Residues 10–18 (LGEGTYAVI) and lysine 46 contribute to the ATP site. Residue aspartate 139 is the Proton acceptor of the active site.

Belongs to the protein kinase superfamily. CMGC Ser/Thr protein kinase family. CDC2/CDKX subfamily. Component of the TFIIH holo complex.

It localises to the nucleus. It catalyses the reaction [DNA-directed RNA polymerase] + ATP = phospho-[DNA-directed RNA polymerase] + ADP + H(+). Functionally, protein kinase component of transcription factor IIH (TFIIH) which phosphorylates the C-terminal domain of RNA polymerase II during transition from transcription to elongation after preinitiation complex (PIC) formation, thereby positively regulating transcription. Essential for both basal and activated transcription, and is involved in nucleotide excision repair (NER) of damaged DNA. This is Probable serine/threonine-protein kinase KIN28 homolog (KIN28) from Encephalitozoon cuniculi (strain GB-M1) (Microsporidian parasite).